The following is a 401-amino-acid chain: Imidazolonepropionase (401 aa).

Fe(3+) contacts are provided by His-66 and His-68. Residues His-66 and His-68 each coordinate Zn(2+). 4-imidazolone-5-propanoate-binding residues include Arg-75, Tyr-138, and His-171. Residue Tyr-138 coordinates N-formimidoyl-L-glutamate. Position 236 (His-236) interacts with Fe(3+). His-236 provides a ligand contact to Zn(2+). 4-imidazolone-5-propanoate is bound at residue Gln-239. Fe(3+) is bound at residue Asp-311. Asp-311 serves as a coordination point for Zn(2+). N-formimidoyl-L-glutamate-binding residues include Asn-313 and Gly-315. Thr-316 contacts 4-imidazolone-5-propanoate.

Belongs to the metallo-dependent hydrolases superfamily. HutI family. Requires Zn(2+) as cofactor. The cofactor is Fe(3+).

The protein resides in the cytoplasm. The catalysed reaction is 4-imidazolone-5-propanoate + H2O = N-formimidoyl-L-glutamate. The protein operates within amino-acid degradation; L-histidine degradation into L-glutamate; N-formimidoyl-L-glutamate from L-histidine: step 3/3. Catalyzes the hydrolytic cleavage of the carbon-nitrogen bond in imidazolone-5-propanoate to yield N-formimidoyl-L-glutamate. It is the third step in the universal histidine degradation pathway. This Pseudomonas putida (Arthrobacter siderocapsulatus) protein is Imidazolonepropionase.